Here is a 561-residue protein sequence, read N- to C-terminus: CWF19-like protein mug161 (561 aa).

The segment at 286–338 is disordered; it reads QQTNKFHKSKSSTALFKSKKDSSSSLNKMHKSESHSALNNLHKSESGTSLNNR. Serine 296 carries the post-translational modification Phosphoserine. Threonine 298 carries the phosphothreonine modification. Phosphoserine occurs at positions 317, 319, 331, and 334. Residues 320–337 show a composition bias toward polar residues; it reads HSALNNLHKSESGTSLNN.

The protein belongs to the CWF19 family.

The protein localises to the nucleus. Its function is as follows. Has a role in meiosis. The chain is CWF19-like protein mug161 (mug161) from Schizosaccharomyces pombe (strain 972 / ATCC 24843) (Fission yeast).